The chain runs to 1601 residues: Ectopic P granules protein 5 (1601 aa).

Residues Met1–Leu109 are disordered. A compositionally biased stretch (basic and acidic residues) spans Arg15 to Asp26.

This sequence belongs to the EPG5 family.

The protein resides in the cytoplasm. Its function is as follows. Involved in autophagy. Has a role in the degradation of protein aggregates within autophagosomes. Essential for starvation-induced autotrophy and omegasome development. This chain is Ectopic P granules protein 5 (epg-5), found in Caenorhabditis briggsae.